Consider the following 230-residue polypeptide: uncharacterized protein (230 aa).

This is an uncharacterized protein from Dictyostelium discoideum (Social amoeba).